The sequence spans 727 residues: MPPPSDIVKVAIEWPGAYPKLMEIDQKKPLSAIIKEVCDGWSLANHEYFALQHADSSNFYITEKNRNEIKNGTILRLTTSPAQNAQQLHERIQSSSMDAKLEALKDLASLSRDVTFAQEFINLDGISLLTQMVESGTERYQKLQKIMKPCFGDMLSFTLTAFVELMDHGIVSWDTFSVAFIKKIASFVNKSAIDISILQRSLAILESMVLNSHDLYQKVAQEITIGQLIPHLQGTDQEIQTYTIAVINALFLKAPDERRQEMANILAQKQLRYIILTHVIRAQRAINNEMAHQLYVLQVLTFNLLEDRMMTKMDPQDQAQRDIIFELRRIAFDAESEPNNSSGSMEKRKSMYTRDYKKLGFINHVNPAMDFTQTPPGMLALDNMLYFAKHHQDAYIRIVLENSSREDKHECPFGRSSIELTKMLCEILKVGELPSETCNDFHPMFFTHDRSFEEFFCICIQLLNKTWKEMRATSEDFNKVMQVVKEQVMRALTTKPSSLDQFKSKLQNLSYTEILKIRQSERMNQEDFQSRPILELKEKIQPEILELIKQQRLNRLVEGTCFRKLNARRRQDKFWYCRLSPNHKVLHYGDLEESPQGEVPHDSLQDKLPVADIKAVVTGKDCPHMKEKGALKQNKEVLELAFSILYDSNCQLNFIAPDKHEYCIWTDGLNALLGKDMMSDLTRNDLDTLLSMEIKLRLLDLENIQIPDAPPPIPKEPSNYDFVYDCN.

Position 18 is a phosphotyrosine; by HCK (Tyr18). N6-acetyllysine occurs at positions 100 and 105. Tyr216 bears the Phosphotyrosine; by HCK mark. The ELMO domain occupies 319–492 (AQRDIIFELR…VVKEQVMRAL (174 aa)). A Phosphoserine modification is found at Ser344. Phosphotyrosine; by HCK is present on residues Tyr395 and Tyr511. The 122-residue stretch at 555-676 (RLVEGTCFRK…DGLNALLGKD (122 aa)) folds into the PH domain. Positions 707 to 714 (PDAPPPIP) match the SH3-binding motif. A Phosphotyrosine; by HCK modification is found at Tyr720.

In terms of assembly, interacts directly with the SH3-domain of DOCK1 via its SH3-binding site. Probably forms a heterotrimeric complex with DOCK1 and RAC1. Interacts with PLEKHG6. Interacts with HCK (via SH3 domain). Interacts with ADGRB1. Interacts with ADGRB3. Interacts with DOCK5. Post-translationally, phosphorylated by HCK.

The protein localises to the cytoplasm. Its subcellular location is the cell membrane. In terms of biological role, involved in cytoskeletal rearrangements required for phagocytosis of apoptotic cells and cell motility. Acts in association with DOCK1 and CRK. Was initially proposed to be required in complex with DOCK1 to activate Rac Rho small GTPases. May enhance the guanine nucleotide exchange factor (GEF) activity of DOCK1. This is Engulfment and cell motility protein 1 (Elmo1) from Mus musculus (Mouse).